Consider the following 156-residue polypeptide: Large ribosomal subunit protein uL15 (156 aa).

A compositionally biased stretch (basic residues) spans 1–16 (MVRRFKRGTKYRRGSR). Residues 1–37 (MVRRFKRGTKYRRGSRTHGWGRVGQHRKSGGSGGKGM) form a disordered region.

This sequence belongs to the universal ribosomal protein uL15 family. As to quaternary structure, part of the 50S ribosomal subunit.

Binds to the 23S rRNA. The polypeptide is Large ribosomal subunit protein uL15 (Pyrobaculum aerophilum (strain ATCC 51768 / DSM 7523 / JCM 9630 / CIP 104966 / NBRC 100827 / IM2)).